The primary structure comprises 1058 residues: Lon protease homolog, mitochondrial (1058 aa).

The transit peptide at 1–47 (MLTRIRNAGVGGNAARRVRLLAGYTGARMAHAAALNSTTGAGGAARA) directs the protein to the mitochondrion. The tract at residues 72–151 (GGQCILKQDR…RSNPPSEGEV (80 aa)) is disordered. Basic and acidic residues-rich tracts occupy residues 78–97 (KQDREPDQSDDKKVPPRAEE) and 106–118 (DEEAERQPREEQA). Residues 129-142 (GSGGSASSAGGGGR) are compositionally biased toward gly residues. The region spanning 158-412 (LMVLPMSNRP…KALVFIKKEV (255 aa)) is the Lon N-terminal domain. 564–571 (GPPGVGKT) serves as a coordination point for ATP. The interval 778-814 (TPKSAPAETNIEPENGKPDASAKPLTNNLPAPEPLNI) is disordered. The Lon proteolytic domain occupies 844–1030 (KTPAGVVMGL…DDVFNVLFGS (187 aa)). Residues S936 and K979 contribute to the active site.

This sequence belongs to the peptidase S16 family. In terms of assembly, homohexamer or homoheptamer. Organized in a ring with a central cavity.

Its subcellular location is the mitochondrion matrix. It carries out the reaction Hydrolysis of proteins in presence of ATP.. Its function is as follows. ATP-dependent serine protease that mediates the selective degradation of misfolded, unassembled or oxidatively damaged polypeptides as well as certain short-lived regulatory proteins in the mitochondrial matrix. May also have a chaperone function in the assembly of inner membrane protein complexes. Participates in the regulation of mitochondrial gene expression and in the maintenance of the integrity of the mitochondrial genome. Binds to mitochondrial DNA in a site-specific manner. The polypeptide is Lon protease homolog, mitochondrial (Eremothecium gossypii (strain ATCC 10895 / CBS 109.51 / FGSC 9923 / NRRL Y-1056) (Yeast)).